Consider the following 216-residue polypeptide: MILDILVKLNKLKIILASTSPRRIEYLGKLGVKFEIVESKFKEDLDKSQFQSVYDYCLENAKLKAIHAGIQLKEQNQQPNIIIGSDSIVVYDNKIFEKPKSLEEAKSMLTLLSGKIHTVCTAVHIEFFNENTNSKGSSSFYTLTNVEFDQLSPELINYYVDNFKPLDKAGSYGIQQTPAASFIKSINGDFYNVTGLPIHDLSINLRKIYVDNFLEK.

Aspartate 86 acts as the Proton acceptor in catalysis.

It belongs to the Maf family. A divalent metal cation serves as cofactor.

It localises to the cytoplasm. It carries out the reaction a ribonucleoside 5'-triphosphate + H2O = a ribonucleoside 5'-phosphate + diphosphate + H(+). It catalyses the reaction a 2'-deoxyribonucleoside 5'-triphosphate + H2O = a 2'-deoxyribonucleoside 5'-phosphate + diphosphate + H(+). Nucleoside triphosphate pyrophosphatase. May have a dual role in cell division arrest and in preventing the incorporation of modified nucleotides into cellular nucleic acids. The chain is Nucleoside triphosphate pyrophosphatase from Dictyostelium discoideum (Social amoeba).